The sequence spans 442 residues: MIILFDFFDKKSKDLYYSLITSGLHGNAVVINDDGFLPQNINSPYSFFCNMEGKNGNPLYFNQVPLPDLWEIKGNNIEAEIWDFSIKRAKIFYQEPKYKRQVKNIDWFDNNKKVRYTDHYNRFGWCFARTHFDKNQNVTTKSYFDKDGKEVIVENFRTGVIILNWLNKDYFFDNRVAFLNFYFSLMGWNLSRIWYNSLSTPFFVSYRMTYPGEDILFWQEDIEDTIPANMRVLLESTNTRTQKVIVQKKNTYHKIKSMLPKEQQEKIGYLGFIYPNKKNNKGRKDIFILTNSDQIEHLEVLVHHLSDYHFHIAAYTEMSFKLMSFSQEQNVTLYPNISRTDLDNLFEICDIYFDINHGNEVDDVIRRAFEYNHLIFAFDNTCHNRELVLDSNIISHTTCEQLINLMKNLSGSIMYLLEQQREQTSNETKERYKEILGGYGNA.

It belongs to the GtfB family. As to quaternary structure, interacts with glycosyltransferase GtfA (Gtf1). Interacts with glycosyltransferase GtfA; probably forms a heterotetramer with 2 subunits each of GtfA and GtfB. Part of the accessory SecA2/SecY2 protein translocation apparatus.

The protein resides in the cell membrane. Its pathway is protein modification; protein glycosylation. Its function is as follows. Required for the polymorphic O-glycosylation of the serine-rich repeat protein Srr2. A stabilizing protein that is part of the accessory SecA2/SecY2 system specifically required to export serine-rich repeat proteins, probably Srr2 in this organism. The GtfA-GtfB (Gtf1-Gtf2 in this bacteria) complex adds GlcNAc from UDP-GlcNAc to Srr2 substrate, attaching the first sugar residue. Stabilizes the glycosylation activity of GtfA in vivo. Upon expression in a gtfB deletion mutant of S.parasanguis, GtfB confers incorrect glycosylation and partial complementation of a biofilm formation defect, while GtfA/GtfB restores correct expression of serine-rich repeat protein Fap1 and completely restores a biofilm formation defect in a S.parasanguis double gtfA-gtfB deletion. This chain is UDP-N-acetylglucosamine--peptide N-acetylglucosaminyltransferase stabilizing protein GtfB, found in Streptococcus agalactiae.